The sequence spans 517 residues: MNQINYLTSERNFLPPTDRDILNLGNNSSNSNNNSSSSNNNNNNNNNNNNNNNNNNNNSNSNSNSNNNNNNNSNNNNSSSSPDHMSLHSNGMDIHHNQQNHHYQNIQHQPHHFQQNYDERRIDYGNNNNNNNTNSMNNSNNNSNNNSNNNSNNNNNNNNNNNNNNNNNNSNNNNNSNNNNFNYNIKQQPQQTLQNQIVNMNGNIITSNGNHHYPTPHMLYARMAEIVEEPLYVNAKQYNRILKRRAARAKLESENKLPKTRKAYQHESRHQHAIRRQRGCGGRFLTKADQAKLDAQNAANAAAAAANPNASSTSTTTSNITNNNNNNNNNNNTNNNNNNNNTNVNGSGGSGGSNKIASSDDDIENDVENDSDSANIKNNSNSPNQSSSSPPPSKSKVVKKSNTINKRNNNINNNNNNNNNNNNEKTQPISSSSSSSSPLLNNGHIQAQQNQSPSSSPSQNLPPLNFSNNINNNINNNGNPTNFNNNNPNNNPNNNNNNNPNNNSFLPPLSNFSNNRS.

The segment covering 1–11 (MNQINYLTSER) has biased composition (polar residues). Disordered stretches follow at residues 1-95 (MNQI…MDIH), 121-183 (RIDY…NFNY), 252-281 (ESENKLPKTRKAYQHESRHQHAIRRQRGCG), and 304-517 (AAAN…NNRS). Composition is skewed to low complexity over residues 26 to 81 (NNSS…SSSS) and 126 to 183 (NNNN…NFNY). The Subunit association domain (SAD) signature appears at 232 to 255 (YVNAKQYNRILKRRAARAKLESEN). The segment at residues 262-287 (KAYQHESRHQHAIRRQRGCGGRFLTK) is a DNA-binding region (NFYA/HAP2-type). Residues 304–345 (AAANPNASSTSTTTSNITNNNNNNNNNNNTNNNNNNNNTNVN) show a composition bias toward low complexity. Residues 359-371 (SDDDIENDVENDS) show a composition bias toward acidic residues. 2 stretches are compositionally biased toward low complexity: residues 377 to 388 (KNNSNSPNQSSS) and 408 to 423 (NNNINNNNNNNNNNNN). The segment covering 438–447 (PLLNNGHIQA) has biased composition (polar residues). The segment covering 448-517 (QQNQSPSSSP…PLSNFSNNRS (70 aa)) has biased composition (low complexity).

This sequence belongs to the NFYA/HAP2 subunit family. As to quaternary structure, heterotrimeric transcription factor composed of three components, nfyA, nfyB and nfyC. nfyB and nfyC must interact and dimerize for nfyA association and DNA binding.

It localises to the nucleus. Its function is as follows. Component of the NF-Y/HAP transcription factor complex. The NF-Y complex stimulates the transcription of various genes by recognizing and binding to a CCAAT motif in promoters. The polypeptide is Nuclear transcription factor Y subunit alpha (nfyA) (Dictyostelium discoideum (Social amoeba)).